A 123-amino-acid polypeptide reads, in one-letter code: KxDL motif-containing protein LO9-177 (123 aa).

Residues 78–81 carry the KxDL motif; it reads KDDL.

It belongs to the KXD1 family. Homodimer. Component of a nuclear cell elongation controlling complex made of ILI5/BUL1, LO9-177 and BC1. Binds directly to ILI5/BUL1, ILI4/BU1, BUL2 and BUL3. Binds to BC1 in the nucleus. Interacts with BCL1.

It localises to the nucleus. The protein localises to the cytoplasm. Contributes, together with ILI5/BUL1 and BC1, to the promotion of leaf inclination and grain size by modulating cell elongation. The polypeptide is KxDL motif-containing protein LO9-177 (Oryza sativa subsp. indica (Rice)).